The sequence spans 100 residues: MRLTPHEQERLLLSYAAELARRRQARGLKLNHPEAVAIITDHILEGARDGRTVAELMISGRDVLGRDDVLVGVPEMLDDVQVEATFPDGTKLVTVHHPIP.

The protein belongs to the urease gamma subunit family. In terms of assembly, heterotrimer of UreA (gamma), UreB (beta) and UreC (alpha) subunits. Three heterotrimers associate to form the active enzyme.

Its subcellular location is the cytoplasm. It carries out the reaction urea + 2 H2O + H(+) = hydrogencarbonate + 2 NH4(+). The protein operates within nitrogen metabolism; urea degradation; CO(2) and NH(3) from urea (urease route): step 1/1. This Mycolicibacterium gilvum (strain PYR-GCK) (Mycobacterium gilvum (strain PYR-GCK)) protein is Urease subunit gamma.